The sequence spans 103 residues: MAEFVRNLAEKAPALVNAAVTYSKPRLATFWYYAKVELVPPTPAEIPTAIQSLKKIINSAKTGSFKQLTVKEALLNGLVATEVWMWFYVGEIIGKRGIIGYDV.

The residue at position 2 (Ala-2) is an N-acetylalanine. 4 positions are modified to N6-acetyllysine: Lys-11, Lys-24, Lys-35, and Lys-54.

Component of the ATP synthase complex composed at least of ATP5F1A/subunit alpha, ATP5F1B/subunit beta, ATP5MC1/subunit c (homooctomer), MT-ATP6/subunit a, MT-ATP8/subunit 8, ATP5ME/subunit e, ATP5MF/subunit f, ATP5MG/subunit g, ATP5MK/subunit k, ATP5MJ/subunit j, ATP5F1C/subunit gamma, ATP5F1D/subunit delta, ATP5F1E/subunit epsilon, ATP5PF/subunit F6, ATP5PB/subunit b, ATP5PD/subunit d, ATP5PO/subunit OSCP. ATP synthase complex consists of a soluble F(1) head domain (subunits alpha(3) and beta(3)) - the catalytic core - and a membrane F(0) domain - the membrane proton channel (subunits c, a, 8, e, f, g, k and j). These two domains are linked by a central stalk (subunits gamma, delta, and epsilon) rotating inside the F1 region and a stationary peripheral stalk (subunits F6, b, d, and OSCP).

It localises to the mitochondrion. It is found in the mitochondrion inner membrane. Its function is as follows. Subunit g, of the mitochondrial membrane ATP synthase complex (F(1)F(0) ATP synthase or Complex V) that produces ATP from ADP in the presence of a proton gradient across the membrane which is generated by electron transport complexes of the respiratory chain. ATP synthase complex consist of a soluble F(1) head domain - the catalytic core - and a membrane F(1) domain - the membrane proton channel. These two domains are linked by a central stalk rotating inside the F(1) region and a stationary peripheral stalk. During catalysis, ATP synthesis in the catalytic domain of F(1) is coupled via a rotary mechanism of the central stalk subunits to proton translocation. In vivo, can only synthesize ATP although its ATP hydrolase activity can be activated artificially in vitro. Part of the complex F(0) domain. The chain is ATP synthase F(0) complex subunit g, mitochondrial from Bos taurus (Bovine).